The primary structure comprises 208 residues: Uracil phosphoribosyltransferase (208 aa).

Residues arginine 78, arginine 103, and 130-138 (DPMLATGGS) contribute to the 5-phospho-alpha-D-ribose 1-diphosphate site. Residues isoleucine 193 and 198–200 (GDA) each bind uracil. A 5-phospho-alpha-D-ribose 1-diphosphate-binding site is contributed by aspartate 199.

This sequence belongs to the UPRTase family. Mg(2+) is required as a cofactor.

The enzyme catalyses UMP + diphosphate = 5-phospho-alpha-D-ribose 1-diphosphate + uracil. It functions in the pathway pyrimidine metabolism; UMP biosynthesis via salvage pathway; UMP from uracil: step 1/1. With respect to regulation, allosterically activated by GTP. Functionally, catalyzes the conversion of uracil and 5-phospho-alpha-D-ribose 1-diphosphate (PRPP) to UMP and diphosphate. The chain is Uracil phosphoribosyltransferase from Enterobacter sp. (strain 638).